Here is a 295-residue protein sequence, read N- to C-terminus: Universal stress protein Mb2028c (295 aa).

ATP-binding positions include glycine 13, 117 to 123, 131 to 132, glycine 165, aspartate 198, 262 to 268, and 276 to 278; these read GSSGRGA, SV, GSHGRGG, and SVS.

It belongs to the universal stress protein A family.

The chain is Universal stress protein Mb2028c from Mycobacterium bovis (strain ATCC BAA-935 / AF2122/97).